We begin with the raw amino-acid sequence, 120 residues long: Small ribosomal subunit protein uS13 (120 aa).

The segment at 93–120 (RRGLPCRGQKTKTNARTRKGKRKTVGAA) is disordered.

Belongs to the universal ribosomal protein uS13 family. As to quaternary structure, part of the 30S ribosomal subunit. Forms a loose heterodimer with protein S19. Forms two bridges to the 50S subunit in the 70S ribosome.

Located at the top of the head of the 30S subunit, it contacts several helices of the 16S rRNA. In the 70S ribosome it contacts the 23S rRNA (bridge B1a) and protein L5 of the 50S subunit (bridge B1b), connecting the 2 subunits; these bridges are implicated in subunit movement. Contacts the tRNAs in the A and P-sites. This is Small ribosomal subunit protein uS13 from Sulfurimonas denitrificans (strain ATCC 33889 / DSM 1251) (Thiomicrospira denitrificans (strain ATCC 33889 / DSM 1251)).